A 46-amino-acid polypeptide reads, in one-letter code: Diuretic hormone (46 aa).

The residue at position 46 (I46) is an Isoleucine amide.

Belongs to the sauvagine/corticotropin-releasing factor/urotensin I family.

It is found in the secreted. In terms of biological role, regulation of fluid secretion. Stimulates primary urine secretion by Malpighian tubules and causes a dose-dependent stimulation of cAMP levels in the tubules. The protein is Diuretic hormone of Locusta migratoria (Migratory locust).